Reading from the N-terminus, the 263-residue chain is uncharacterized protein (263 aa).

The interval 22–44 is disordered; the sequence is IDGSDDQSDRTRSSSGDSTSNSL. Residues 34–43 are compositionally biased toward low complexity; it reads SSSGDSTSNS.

It localises to the mitochondrion. This is an uncharacterized protein from Schizosaccharomyces pombe (strain 972 / ATCC 24843) (Fission yeast).